The sequence spans 176 residues: NAD(P)H-quinone oxidoreductase subunit 6, chloroplastic (176 aa).

5 helical membrane passes run 10–30, 33–53, 60–80, 95–115, and 152–172; these read ILMLFGGFILLLGGLGVVLLT, IYSAFSLGLVLVCISLFYFLL, VAQLLIYVGAINVLIIFAVMF, IGDGFTSLVCITFVFSLMTTI, and FYLPFELISIILLVSLIGAIT.

It belongs to the complex I subunit 6 family. NDH is composed of at least 16 different subunits, 5 of which are encoded in the nucleus.

It is found in the plastid. Its subcellular location is the chloroplast thylakoid membrane. The enzyme catalyses a plastoquinone + NADH + (n+1) H(+)(in) = a plastoquinol + NAD(+) + n H(+)(out). The catalysed reaction is a plastoquinone + NADPH + (n+1) H(+)(in) = a plastoquinol + NADP(+) + n H(+)(out). Its function is as follows. NDH shuttles electrons from NAD(P)H:plastoquinone, via FMN and iron-sulfur (Fe-S) centers, to quinones in the photosynthetic chain and possibly in a chloroplast respiratory chain. The immediate electron acceptor for the enzyme in this species is believed to be plastoquinone. Couples the redox reaction to proton translocation, and thus conserves the redox energy in a proton gradient. This Hordeum vulgare (Barley) protein is NAD(P)H-quinone oxidoreductase subunit 6, chloroplastic (ndhG).